A 434-amino-acid polypeptide reads, in one-letter code: Histidinol dehydrogenase (434 aa).

NAD(+) contacts are provided by tyrosine 130, glutamine 188, and asparagine 211. Substrate contacts are provided by serine 237, glutamine 259, and histidine 262. Residues glutamine 259 and histidine 262 each contribute to the Zn(2+) site. Active-site proton acceptor residues include glutamate 326 and histidine 327. Residues histidine 327, aspartate 360, glutamate 414, and histidine 419 each coordinate substrate. Zn(2+) is bound at residue aspartate 360. Position 419 (histidine 419) interacts with Zn(2+).

This sequence belongs to the histidinol dehydrogenase family. Homodimer. The cofactor is Zn(2+).

It carries out the reaction L-histidinol + 2 NAD(+) + H2O = L-histidine + 2 NADH + 3 H(+). Its pathway is amino-acid biosynthesis; L-histidine biosynthesis; L-histidine from 5-phospho-alpha-D-ribose 1-diphosphate: step 9/9. Catalyzes the sequential NAD-dependent oxidations of L-histidinol to L-histidinaldehyde and then to L-histidine. This chain is Histidinol dehydrogenase, found in Escherichia coli (strain K12).